Consider the following 370-residue polypeptide: 4-hydroxy-3-methylbut-2-en-1-yl diphosphate synthase (flavodoxin) (370 aa).

Positions 268, 271, 303, and 310 each coordinate [4Fe-4S] cluster.

Belongs to the IspG family. It depends on [4Fe-4S] cluster as a cofactor.

It catalyses the reaction (2E)-4-hydroxy-3-methylbut-2-enyl diphosphate + oxidized [flavodoxin] + H2O + 2 H(+) = 2-C-methyl-D-erythritol 2,4-cyclic diphosphate + reduced [flavodoxin]. The protein operates within isoprenoid biosynthesis; isopentenyl diphosphate biosynthesis via DXP pathway; isopentenyl diphosphate from 1-deoxy-D-xylulose 5-phosphate: step 5/6. Functionally, converts 2C-methyl-D-erythritol 2,4-cyclodiphosphate (ME-2,4cPP) into 1-hydroxy-2-methyl-2-(E)-butenyl 4-diphosphate. The chain is 4-hydroxy-3-methylbut-2-en-1-yl diphosphate synthase (flavodoxin) from Bacillus licheniformis (strain ATCC 14580 / DSM 13 / JCM 2505 / CCUG 7422 / NBRC 12200 / NCIMB 9375 / NCTC 10341 / NRRL NRS-1264 / Gibson 46).